The sequence spans 325 residues: PGQLGNSGKPGQQGPPGEVGPRGPRGLPGSRGPVGPEGSPGIPGKLGPLGSPGLPGLPGPPGLPGMKGDRGVFGEPGPKGEQGASGEEGEAGVRGDLGDMGQPGPKGSVGNPGEPGLRGPEGIRGLPGVEGPRGPPGPRGVQGEQGATGLPGIQGPPGRAPTDQHIKQVCMRVVQEHFAEMAASLKRPDTGASGLPGRPGPPGPPGPPGENGFPGQMGIRGLPGIKGPPGALGLRGPKGDLGEKGERGPPGRGPKGLPGAIGLPGDPGPASYGKNGRDGEQGPPGVAGIPGVPGPPGPPGPPGFCEPASCTLQAGQRAFSKGPDK.

Residues 1–54 (PGQLGNSGKPGQQGPPGEVGPRGPRGLPGSRGPVGPEGSPGIPGKLGPLGSPGL) show a composition bias toward low complexity. 2 disordered regions span residues 1–163 (PGQL…APTD) and 187–325 (RPDT…GPDK). Residues 198 to 208 (RPGPPGPPGPP) are compositionally biased toward pro residues. Residues 237-249 (PKGDLGEKGERGP) are compositionally biased toward basic and acidic residues. Over residues 292–304 (VPGPPGPPGPPGF) the composition is skewed to pro residues.

It belongs to the fibril-associated collagens with interrupted helices (FACIT) family. Heterotrimer of an alpha 1(IX), an alpha 2(IX) and an alpha 3(IX) chain. In terms of processing, covalently linked to the telopeptides of type II collagen by lysine-derived cross-links. Prolines at the third position of the tripeptide repeating unit (G-X-Y) are hydroxylated in some or all of the chains.

Its subcellular location is the secreted. It is found in the extracellular space. The protein localises to the extracellular matrix. In terms of biological role, structural component of hyaline cartilage and vitreous of the eye. This chain is Collagen alpha-1(IX) chain (Col9a1), found in Rattus norvegicus (Rat).